Reading from the N-terminus, the 282-residue chain is Globin-related protein glb-13 (282 aa).

Positions 1–46 (MGQENSKCPHQSLAEKRYKVERPKTKKVSSGSATERCLSTQSDEKN) are disordered. Basic and acidic residues predominate over residues 13 to 23 (LAEKRYKVERP). Residues 28-41 (VSSGSATERCLSTQ) are compositionally biased toward polar residues. Residues 100–249 (FLTRRERILL…IISFMRRGFD (150 aa)) enclose the Globin domain. Residues H162 and H194 each contribute to the heme b site.

The protein belongs to the globin family.

Its function is as follows. Involved in oxidative stress resistance. The sequence is that of Globin-related protein glb-13 from Caenorhabditis elegans.